The sequence spans 163 residues: Nucleotide-binding protein Tery_2743 (163 aa).

Belongs to the YajQ family.

Its function is as follows. Nucleotide-binding protein. The sequence is that of Nucleotide-binding protein Tery_2743 from Trichodesmium erythraeum (strain IMS101).